Reading from the N-terminus, the 354-residue chain is Putative Xaa-Pro aminopeptidase (354 aa).

The Mn(2+) site is built by Asp213, Asp224, His290, Glu319, and Glu333.

The protein belongs to the peptidase M24B family. Mn(2+) serves as cofactor.

It catalyses the reaction Release of any N-terminal amino acid, including proline, that is linked to proline, even from a dipeptide or tripeptide.. This is Putative Xaa-Pro aminopeptidase (pepP) from Mycoplasma genitalium (strain ATCC 33530 / DSM 19775 / NCTC 10195 / G37) (Mycoplasmoides genitalium).